Consider the following 280-residue polypeptide: Protease HtpX (280 aa).

2 helical membrane-spanning segments follow: residues 7–26 (TFIL…GLLG) and 30–49 (GMLV…YWYS). His-129 provides a ligand contact to Zn(2+). Glu-130 is an active-site residue. Zn(2+) is bound at residue His-133. Helical transmembrane passes span 146-166 (ATIA…SMFG) and 178-198 (VVGM…QMAI). Glu-203 provides a ligand contact to Zn(2+).

Belongs to the peptidase M48B family. Zn(2+) serves as cofactor.

The protein localises to the cell inner membrane. This Legionella pneumophila (strain Lens) protein is Protease HtpX.